The primary structure comprises 109 residues: Nucleoid-associated protein HD_0326 (109 aa).

This sequence belongs to the YbaB/EbfC family. As to quaternary structure, homodimer.

It is found in the cytoplasm. The protein localises to the nucleoid. Functionally, binds to DNA and alters its conformation. May be involved in regulation of gene expression, nucleoid organization and DNA protection. In Haemophilus ducreyi (strain 35000HP / ATCC 700724), this protein is Nucleoid-associated protein HD_0326.